A 247-amino-acid polypeptide reads, in one-letter code: MSTNPKPAFRRILLKLSGEALMGEEGFGIDPKVLDRMAQEIKELVELGIQVGVVIGGGNLFRGEGLAQAGMNRVVGDHMGMLATVMNGLAMRDALHRAYVNARLMSAIPLKGVCDDYNWAEAISLLKSGRVVIFAAGTGNPFCTTDSAACLRGIEIEAEVVLKGTKVDGVYSDDPVKNPEAVKYDEMGYGEVLEKELKVMDLAAFTLARDHDMPILVFNMNKPGALRRVIMGDHEGTLIRSSRKTAE.

15-18 lines the ATP pocket; it reads KLSG. The tract at residues 23 to 28 is involved in allosteric activation by GTP; the sequence is GEEGFG. Gly-57 is a binding site for UMP. Residues Gly-58 and Arg-62 each contribute to the ATP site. UMP-binding positions include Asp-77 and 138–145; that span reads TGNPFCTT. 3 residues coordinate ATP: Thr-165, Tyr-171, and Asp-174.

The protein belongs to the UMP kinase family. Homohexamer.

It is found in the cytoplasm. The catalysed reaction is UMP + ATP = UDP + ADP. It participates in pyrimidine metabolism; CTP biosynthesis via de novo pathway; UDP from UMP (UMPK route): step 1/1. Allosterically activated by GTP. Inhibited by UTP. Its function is as follows. Catalyzes the reversible phosphorylation of UMP to UDP. The chain is Uridylate kinase from Shewanella loihica (strain ATCC BAA-1088 / PV-4).